Consider the following 386-residue polypeptide: Protein RETICULATA-RELATED 4, chloroplastic (386 aa).

The transit peptide at 1 to 61 (MAIASCFFCV…RRVPITPVLS (61 aa)) directs the protein to the chloroplast. The interval 61 to 99 (SASSGNGGSDNNGGGLSGGGGGGDGGKNDGDGHGDEDRD) is disordered. A compositionally biased stretch (gly residues) spans 65–85 (GNGGSDNNGGGLSGGGGGGDG). Residues 86–99 (GKNDGDGHGDEDRD) show a composition bias toward basic and acidic residues. Transmembrane regions (helical) follow at residues 201–221 (VVFADVAMAIIADFMLVYLPA) and 273–293 (KLFAVGTTSSLVGTAITNAFI).

This sequence belongs to the RETICULATA family.

It localises to the plastid. It is found in the chloroplast membrane. May play a role in leaf development. The chain is Protein RETICULATA-RELATED 4, chloroplastic from Arabidopsis thaliana (Mouse-ear cress).